Consider the following 284-residue polypeptide: Pantothenate synthetase (284 aa).

32-39 (MGALHDGH) is an ATP binding site. The active-site Proton donor is the His-39. Gln-63 provides a ligand contact to (R)-pantoate. Gln-63 is a beta-alanine binding site. 149–152 (GEKD) provides a ligand contact to ATP. A (R)-pantoate-binding site is contributed by Gln-155. Residues Ile-178 and 186–189 (MSSR) contribute to the ATP site.

Belongs to the pantothenate synthetase family. As to quaternary structure, homodimer.

The protein localises to the cytoplasm. It catalyses the reaction (R)-pantoate + beta-alanine + ATP = (R)-pantothenate + AMP + diphosphate + H(+). The protein operates within cofactor biosynthesis; (R)-pantothenate biosynthesis; (R)-pantothenate from (R)-pantoate and beta-alanine: step 1/1. Catalyzes the condensation of pantoate with beta-alanine in an ATP-dependent reaction via a pantoyl-adenylate intermediate. The polypeptide is Pantothenate synthetase (Roseobacter denitrificans (strain ATCC 33942 / OCh 114) (Erythrobacter sp. (strain OCh 114))).